A 173-amino-acid polypeptide reads, in one-letter code: Disulfide bond formation protein B 2 (173 aa).

The Cytoplasmic segment spans residues 1–9 (MSLAGSRLL). Residues 10–26 (FSLVFLVGALASWAAFN) traverse the membrane as a helical segment. The Periplasmic portion of the chain corresponds to 27–44 (LQTGGGLESCSLWSVQRL). A helical transmembrane segment spans residues 45-61 (LLLALGGVNLLAVIQGP). Over 62–67 (GRVGRA) the chain is Cytoplasmic. A helical membrane pass occupies residues 68 to 85 (VYWGLNLLLGLLGVVTAG). At 86-142 (RHVLLQNIPSEQLLACLPDMSFMLRQLSWWQALKLTFMGTSDCAEVTWTLLDMSLPE) the chain is on the periplasmic side. Cysteines 101 and 128 form a disulfide. A helical transmembrane segment spans residues 143–161 (WSLLFFVIMLIFSGYRLWR). At 162 to 173 (QLRGARKAVALP) the chain is on the cytoplasmic side.

This sequence belongs to the DsbB family.

The protein resides in the cell inner membrane. Functionally, required for disulfide bond formation in some periplasmic proteins. Acts by oxidizing the DsbA protein. The protein is Disulfide bond formation protein B 2 of Pseudomonas fluorescens (strain ATCC BAA-477 / NRRL B-23932 / Pf-5).